Consider the following 100-residue polypeptide: Urease subunit gamma (100 aa).

Belongs to the urease gamma subunit family. In terms of assembly, heterotrimer of UreA (gamma), UreB (beta) and UreC (alpha) subunits. Three heterotrimers associate to form the active enzyme.

Its subcellular location is the cytoplasm. The catalysed reaction is urea + 2 H2O + H(+) = hydrogencarbonate + 2 NH4(+). The protein operates within nitrogen metabolism; urea degradation; CO(2) and NH(3) from urea (urease route): step 1/1. The sequence is that of Urease subunit gamma from Mycolicibacterium vanbaalenii (strain DSM 7251 / JCM 13017 / BCRC 16820 / KCTC 9966 / NRRL B-24157 / PYR-1) (Mycobacterium vanbaalenii).